The sequence spans 183 residues: Ribulose bisphosphate carboxylase small subunit, chloroplastic 3 (183 aa).

Residues 1-43 (MATTMLNRSVIVNKEVAKTPNFPRATKNNKGFASNAAVQKCRD) constitute a chloroplast transit peptide.

The protein belongs to the RuBisCO small chain family. Heterohexadecamer of 8 large and 8 small subunits.

The protein resides in the plastid. It localises to the chloroplast. In terms of biological role, ruBisCO catalyzes two reactions: the carboxylation of D-ribulose 1,5-bisphosphate, the primary event in carbon dioxide fixation, as well as the oxidative fragmentation of the pentose substrate. Both reactions occur simultaneously and in competition at the same active site. Although the small subunit is not catalytic it is essential for maximal activity. This Acetabularia peniculus (Green alga) protein is Ribulose bisphosphate carboxylase small subunit, chloroplastic 3.